Consider the following 264-residue polypeptide: [LysW]-aminoadipate/[LysW]-glutamate kinase (264 aa).

Residues 35–36 (GG), Arg-62, and Asn-167 each bind substrate.

It belongs to the acetylglutamate kinase family. LysZ subfamily.

It localises to the cytoplasm. The enzyme catalyses [amino-group carrier protein]-C-terminal-N-(1,4-dicarboxybutan-1-yl)-L-glutamine + ATP = [amino-group carrier protein]-C-terminal-N-(1-carboxy-5-phosphooxy-5-oxopentan-1-yl)-L-glutamine + ADP. It carries out the reaction [amino-group carrier protein]-C-terminal-gamma-(L-glutamyl)-L-glutamate + ATP = [amino-group carrier protein]-C-terminal-gamma-(5-phospho-L-glutamyl)-L-glutamate + ADP. The protein operates within amino-acid biosynthesis; L-lysine biosynthesis via AAA pathway; L-lysine from L-alpha-aminoadipate (Thermus route): step 2/5. It functions in the pathway amino-acid biosynthesis; L-arginine biosynthesis. Functionally, involved in both the arginine and lysine biosynthetic pathways. Phosphorylates the LysW-bound precursors glutamate (for arginine biosynthesis), respectively alpha-aminoadipate (for lysine biosynthesis). The sequence is that of [LysW]-aminoadipate/[LysW]-glutamate kinase from Saccharolobus islandicus (strain Y.N.15.51 / Yellowstone #2) (Sulfolobus islandicus).